The chain runs to 226 residues: Leucyl/phenylalanyl-tRNA--protein transferase (226 aa).

The protein belongs to the L/F-transferase family.

The protein localises to the cytoplasm. It catalyses the reaction N-terminal L-lysyl-[protein] + L-leucyl-tRNA(Leu) = N-terminal L-leucyl-L-lysyl-[protein] + tRNA(Leu) + H(+). The catalysed reaction is N-terminal L-arginyl-[protein] + L-leucyl-tRNA(Leu) = N-terminal L-leucyl-L-arginyl-[protein] + tRNA(Leu) + H(+). The enzyme catalyses L-phenylalanyl-tRNA(Phe) + an N-terminal L-alpha-aminoacyl-[protein] = an N-terminal L-phenylalanyl-L-alpha-aminoacyl-[protein] + tRNA(Phe). Functions in the N-end rule pathway of protein degradation where it conjugates Leu, Phe and, less efficiently, Met from aminoacyl-tRNAs to the N-termini of proteins containing an N-terminal arginine or lysine. This is Leucyl/phenylalanyl-tRNA--protein transferase from Bradyrhizobium diazoefficiens (strain JCM 10833 / BCRC 13528 / IAM 13628 / NBRC 14792 / USDA 110).